Consider the following 332-residue polypeptide: Galactosylgalactosylxylosylprotein 3-beta-glucuronosyltransferase 1 (332 aa).

The Cytoplasmic segment spans residues 1 to 6 (MPKRRD). Residues 3–5 (KRR) are essential for transport from endoplasmic reticulum to Golgi apparatus and interaction with SAR1A. A helical; Signal-anchor for type II membrane protein membrane pass occupies residues 7–27 (ILAIVLIVLPWTLLITVWHQS). The Lumenal portion of the chain corresponds to 28–332 (TLAPLLAVHK…KGFTDPSVEI (305 aa)). 91-93 (PTY) is a UDP-alpha-D-glucuronate binding site. Phosphothreonine is present on residues T103 and T108. Residue D122 participates in UDP-alpha-D-glucuronate binding. N-linked (GlcNAc...) asparagine glycosylation is present at N140. R165 and R170 together coordinate UDP-alpha-D-glucuronate. Residue N184 is glycosylated (N-linked (GlcNAc...) asparagine). 195–197 (DDD) is a binding site for UDP-alpha-D-glucuronate. Residue D197 participates in Mn(2+) binding. The tract at residues 243-252 (FDPHRPFAID) is interaction with galactose moiety of substrate glycoprotein. E282 serves as the catalytic Proton donor/acceptor. The N-linked (GlcNAc...) asparagine glycan is linked to N301. 309 to 311 (HTR) serves as a coordination point for UDP-alpha-D-glucuronate.

Belongs to the glycosyltransferase 43 family. Homodimer. Interacts with SAR1A. The cofactor is Mn(2+). The soluble form derives from the membrane form by proteolytic processing.

Its subcellular location is the golgi apparatus membrane. The protein resides in the secreted. It carries out the reaction 3-O-(beta-D-galactosyl-(1-&gt;3)-beta-D-galactosyl-(1-&gt;4)-beta-D-xylosyl)-L-seryl-[protein] + UDP-alpha-D-glucuronate = 3-O-(beta-D-GlcA-(1-&gt;3)-beta-D-Gal-(1-&gt;3)-beta-D-Gal-(1-&gt;4)-beta-D-Xyl)-L-seryl-[protein] + UDP + H(+). Its pathway is protein modification; protein glycosylation. Involved in the biosynthesis of L2/HNK-1 carbohydrate epitope on glycoproteins. Can also play a role in glycosaminoglycan biosynthesis. Substrates include asialo-orosomucoid (ASOR), asialo-fetuin, and asialo-neural cell adhesion molecule. Requires sphingomyelin for activity: stearoyl-sphingomyelin was the most effective, followed by palmitoyl-sphingomyelin and lignoceroyl-sphingomyelin. Activity was demonstrated only for sphingomyelin with a saturated fatty acid and not for that with an unsaturated fatty acid, regardless of the length of the acyl group. The polypeptide is Galactosylgalactosylxylosylprotein 3-beta-glucuronosyltransferase 1 (Pan troglodytes (Chimpanzee)).